The sequence spans 434 residues: Protein maelstrom homolog (434 aa).

The segment at residues 4 to 73 (RKASRNAYYF…AQGKDSGPSE (70 aa)) is a DNA-binding region (HMG box). Disordered regions lie at residues 62-94 (RAAQGKDSGPSEKQKPVFTPLRKPGMLVPKQNV) and 357-385 (SHFNSANQEQRSNTPIGDYPSRAKISGQN). The span at 357 to 371 (SHFNSANQEQRSNTP) shows a compositional bias: polar residues.

It belongs to the maelstrom family. As to quaternary structure, interacts with SMARCB1, SIN3B and DDX4. Interacts with piRNA-associated proteins TDRD1, PIWIL1 and PIWIL2. Interacts with TEX19.

It localises to the cytoplasm. The protein localises to the nucleus. Its function is as follows. Plays a central role during spermatogenesis by repressing transposable elements and preventing their mobilization, which is essential for the germline integrity. Acts via the piRNA metabolic process, which mediates the repression of transposable elements during meiosis by forming complexes composed of piRNAs and Piwi proteins and governs the methylation and subsequent repression of transposons. Its association with piP-bodies suggests a participation in the secondary piRNAs metabolic process. Required for the localization of germ-cell factors to the meiotic nuage. The protein is Protein maelstrom homolog (MAEL) of Macaca fascicularis (Crab-eating macaque).